The following is a 230-amino-acid chain: NAD(P)H-hydrate epimerase (230 aa).

The YjeF N-terminal domain maps to 11-223 (YAAADIRAAE…DVGLDLSGAT (213 aa)). Residue 59-63 (NNGGD) participates in (6S)-NADPHX binding. Residues Asn60 and Asp125 each coordinate K(+). Residues 129–137 (GIGTTDSPA) and Asp165 each bind (6S)-NADPHX. Residue Ser168 coordinates K(+).

This sequence belongs to the NnrE/AIBP family. K(+) serves as cofactor.

It carries out the reaction (6R)-NADHX = (6S)-NADHX. The enzyme catalyses (6R)-NADPHX = (6S)-NADPHX. Catalyzes the epimerization of the S- and R-forms of NAD(P)HX, a damaged form of NAD(P)H that is a result of enzymatic or heat-dependent hydration. This is a prerequisite for the S-specific NAD(P)H-hydrate dehydratase to allow the repair of both epimers of NAD(P)HX. The sequence is that of NAD(P)H-hydrate epimerase from Clavibacter michiganensis subsp. michiganensis (strain NCPPB 382).